The sequence spans 368 residues: MTQNFFNPVTTQTWTNGRHNVRCVKVIQETWDVRTFCFMADQPVLFFFKPGQFVTLELEIDGEAVMRSYTISSSPSVPYSFSITVKRLPDGRVSNWLHENLQVGSELVVHGPVGDFNVIDYPADKVLMLSGGVGVTPLMSMTRWFFDTNANVDLQFVHSARTPRDIIFHRELEHIFSRIPDFRLHIVCERGDESGEPWAGFRGYLAQAMLELMVPDYLEREIFCCGPTPYMKAVKQVLKSNGFDMSHYHEESFGATPADVRADVEELAEQAEAEMEAVDTADMLQVEFSNSGKSIRIMPEETVHAAAAKLGLHIPKACGMGICGTCKVKKLAGEVTMEHNGGITEEDEADGYILSCCSTPKSHVAIEF.

The FAD-binding FR-type domain occupies 16 to 119; the sequence is NGRHNVRCVK…HGPVGDFNVI (104 aa). One can recognise a 2Fe-2S ferredoxin-type domain in the interval 284–368; it reads LQVEFSNSGK…TPKSHVAIEF (85 aa). The [2Fe-2S] cluster site is built by cysteine 318, cysteine 323, cysteine 326, and cysteine 356.

It in the N-terminal section; belongs to the FAD-binding oxidoreductase type 6 family. In terms of assembly, monomer. The system is composed of an oxygenase subunit (BmoA) and a reductase subunit (BmoB). Maximal specific activity is obtained when the ratio of BmoA to BmoB is 5:1. The cofactor is FAD. [2Fe-2S] cluster serves as cofactor.

It carries out the reaction glycine betaine + NADH + O2 + H(+) = N,N-dimethylglycine + formaldehyde + NAD(+) + H2O. In terms of biological role, involved in degradation of glycine betaine. Part of a Rieske-type oxygenase system that catalyzes the conversion of glycine betaine (GB) to dimethylglycine (DMG). This subunit is the ferredoxin reductase component of the system. NADH is the preferred electron donor. The protein is Glycine betaine monooxygenase reductase subunit of Chromohalobacter salexigens (strain ATCC BAA-138 / DSM 3043 / CIP 106854 / NCIMB 13768 / 1H11).